The chain runs to 86 residues: Cyclin-dependent kinase inhibitor 6 (86 aa).

Over residues 1–15 (MAAAAATVTAVQPAA) the composition is skewed to low complexity. The segment at 1–23 (MAAAAATVTAVQPAASSCGKRDG) is disordered.

It belongs to the CDI family. ICK/KRP subfamily.

The chain is Cyclin-dependent kinase inhibitor 6 (KRP6) from Oryza sativa subsp. japonica (Rice).